A 258-amino-acid chain; its full sequence is uncharacterized protein (258 aa).

A signal peptide spans 1-20; sequence MKCFQKLYIFILILIVLMAG. C21 carries the N-palmitoyl cysteine lipid modification. Residue C21 is the site of S-diacylglycerol cysteine attachment.

The protein belongs to the staphylococcal tandem lipoprotein family.

It is found in the cell membrane. This is an uncharacterized protein from Staphylococcus aureus (strain COL).